The following is a 960-amino-acid chain: Dynamin-like GTPase OPA1, mitochondrial (960 aa).

A mitochondrion-targeting transit peptide spans 1 to 87 (MWRAGRAAVA…IKYGYQPRRN (87 aa)). The Mitochondrial matrix segment spans residues 88 to 96 (FWPARLAAR). A helical membrane pass occupies residues 97-113 (LLKLRYIILGSAVGGGY). The Mitochondrial intermembrane segment spans residues 114–770 (TAKKTFDEWK…NAIENMIGPD (657 aa)). A coiled-coil region spans residues 210–254 (SDKEKIDQLQEELLHTQLKYQRILERLEKENKELRKLVLQKDDKG). An LQQQIQ motif motif is present at residues 217–222 (QLQEEL). Position 228 is an N6-acetyllysine (Lys228). Residues 285 to 561 (QDHLPRVVVV…FWKMVRESVE (277 aa)) enclose the Dynamin-type G domain. A G1 motif region spans residues 295–302 (GDQSAGKT). GTP contacts are provided by Ser298, Gly300, Lys301, Thr302, Ser303, and Gly317. Thr302 lines the Mg(2+) pocket. The G2 motif stretch occupies residues 321-324 (MMTR). Residues Thr323 and Asp398 each contribute to the Mg(2+) site. A G3 motif region spans residues 398–401 (DLPG). The tract at residues 467–470 (TKVD) is G4 motif. Lys468, Asp470, and Thr503 together coordinate GTP. The segment at 501–504 (VVTG) is G5 motif. Stalk region stretches follow at residues 589–836 (DRNE…IKDT) and 874–928 (CNDV…VKLL). The interval 736 to 856 (SDKQQWDAAI…KTALNHCNLC (121 aa)) is paddle region. The stretch at 771–781 (WKKRWMYWKNR) is an intramembrane region. Topologically, residues 782-960 (TQEQCVHNET…AFIEALHQEK (179 aa)) are mitochondrial intermembrane. Cysteines 856 and 874 form a disulfide. Residues 895–960 (RQQLTNTEVR…AFIEALHQEK (66 aa)) adopt a coiled-coil conformation.

It belongs to the TRAFAC class dynamin-like GTPase superfamily. Dynamin/Fzo/YdjA family. Oligomeric complex consisting of membrane-bound and soluble forms of OPA1. Interacts with RCC1L; RCC1L acts as a guanine nucleotide exchange factor (GEF) for OPA1 by exchanging bound GDP for free GTP. Interacts with CHCHD3 and IMMT; these interactions occur preferentially with soluble OPA1 forms. Interacts with PRELID1. In terms of processing, cleaved by OMA1 or YME1L downstream of the transmembrane region in response to different signals to generate soluble forms. Cleaved by OMA1 at position S1 following stress conditions, generating the short soluble form (Dynamin-like GTPase OPA1, short form; S-OPA1). AFG3L2 is involved in the regulation of OMA1-dependent processing of OPA1. PARL-dependent proteolytic processing releases an antiapoptotic soluble form not required for mitochondrial fusion. Cleavage at position S2 by YME1L is required to mediate oxidative phosphorylation (OXPHOS)-induced mitochondrial fusion. Cleavage occurs in the sequence motif Leu-Gln-Gln-Gln-Ile-Gln (LQQQIQ). Post-translationally, cleavage at position S3 by YME1L is required for membrane tubulation. In terms of tissue distribution, detected in brain (at protein level). Detected in brain, brain stem, heart, kidney, liver and skeletal muscle.

Its subcellular location is the mitochondrion inner membrane. It is found in the mitochondrion intermembrane space. It catalyses the reaction GTP + H2O = GDP + phosphate + H(+). Activated by guanine nucleotide exchange factor RCC1L. Dynamin-related GTPase that is essential for normal mitochondrial morphology by mediating fusion of the mitochondrial inner membranes, regulating cristae morphology and maintaining respiratory chain function. Exists in two forms: the transmembrane, long form (Dynamin-like GTPase OPA1, long form; L-OPA1), which is tethered to the inner mitochondrial membrane, and the short soluble form (Dynamin-like GTPase OPA1, short form; S-OPA1), which results from proteolytic cleavage and localizes in the intermembrane space. Both forms (L-OPA1 and S-OPA1) cooperate to catalyze the fusion of the mitochondrial inner membrane. The equilibrium between L-OPA1 and S-OPA1 is essential: excess levels of S-OPA1, produced by cleavage by OMA1 following loss of mitochondrial membrane potential, lead to an impaired equilibrium between L-OPA1 and S-OPA1, inhibiting mitochondrial fusion. The balance between L-OPA1 and S-OPA1 also influences cristae shape and morphology. Involved in remodeling cristae and the release of cytochrome c during apoptosis. Proteolytic processing by PARL in response to intrinsic apoptotic signals may lead to disassembly of OPA1 oligomers and release of the caspase activator cytochrome C (CYCS) into the mitochondrial intermembrane space. Acts as a regulator of T-helper Th17 cells, which are characterized by cells with fused mitochondria with tight cristae, by mediating mitochondrial membrane remodeling: OPA1 is required for interleukin-17 (IL-17) production. Its role in mitochondrial morphology is required for mitochondrial genome maintenance. Its function is as follows. Constitutes the transmembrane long form (L-OPA1) that plays a central role in mitochondrial inner membrane fusion and cristae morphology. L-OPA1 and the soluble short form (S-OPA1) form higher-order helical assemblies that coordinate the fusion of mitochondrial inner membranes. Inner membrane-anchored L-OPA1 molecules initiate membrane remodeling by recruiting soluble S-OPA1 to rapidly polymerize into a flexible cylindrical scaffold encaging the mitochondrial inner membrane. Once at the membrane surface, the formation of S-OPA1 helices induce bilayer curvature. OPA1 dimerization through the paddle region, which inserts into cardiolipin-containing membrane, promotes GTP hydrolysis and the helical assembly of a flexible OPA1 lattice on the membrane, which drives membrane curvature and mitochondrial fusion. Plays a role in the maintenance and remodeling of mitochondrial cristae, some invaginations of the mitochondrial inner membrane that provide an increase in the surface area. Probably acts by forming helical filaments at the inside of inner membrane tubes with the shape and dimensions of crista junctions. The equilibrium between L-OPA1 and S-OPA1 influences cristae shape and morphology: increased L-OPA1 levels promote cristae stacking and elongated mitochondria, while increased S-OPA1 levels correlated with irregular cristae packing and round mitochondria shape. In terms of biological role, constitutes the soluble short form (S-OPA1) generated by cleavage by OMA1, which plays a central role in mitochondrial inner membrane fusion and cristae morphology. The transmembrane long form (L-OPA1) and the S-OPA1 form higher-order helical assemblies that coordinate the fusion of mitochondrial inner membranes. Inner membrane-anchored L-OPA1 molecules initiate membrane remodeling by recruiting soluble S-OPA1 to rapidly polymerize into a flexible cylindrical scaffold encaging the mitochondrial inner membrane. Once at the membrane surface, the formation of S-OPA1 helices induce bilayer curvature. OPA1 dimerization through the paddle region, which inserts into cardiolipin-containing membrane, promotes GTP hydrolysis and the helical assembly of a flexible OPA1 lattice on the membrane, which drives membrane curvature and mitochondrial fusion. Excess levels of S-OPA1 produced by cleavage by OMA1 following stress conditions that induce loss of mitochondrial membrane potential, lead to an impaired equilibrium between L-OPA1 and S-OPA1, thereby inhibiting mitochondrial fusion. Involved in mitochondrial safeguard in response to transient mitochondrial membrane depolarization by mediating flickering: cleavage by OMA1 leads to excess production of S-OPA1, preventing mitochondrial hyperfusion. Plays a role in the maintenance and remodeling of mitochondrial cristae, some invaginations of the mitochondrial inner membrane that provide an increase in the surface area. Probably acts by forming helical filaments at the inside of inner membrane tubes with the shape and dimensions of crista junctions. The equilibrium between L-OPA1 and S-OPA1 influences cristae shape and morphology: increased L-OPA1 levels promote cristae stacking and elongated mitochondria, while increased S-OPA1 levels correlated with irregular cristae packing and round mitochondria shape. Functionally, isoforms that contain the alternative exon 4b are required for mitochondrial genome maintenance, possibly by anchoring the mitochondrial nucleoids to the inner mitochondrial membrane. The protein is Dynamin-like GTPase OPA1, mitochondrial of Mus musculus (Mouse).